The sequence spans 329 residues: L-arabinose-binding periplasmic protein (329 aa).

An N-terminal signal peptide occupies residues 1 to 23 (MHKFTKALAAIGLAAVMSQSAMA).

The protein belongs to the bacterial solute-binding protein 2 family.

It is found in the periplasm. In terms of biological role, involved in the high-affinity L-arabinose membrane transport system. Binds with high affinity to arabinose, but can also bind D-galactose (approximately 2-fold reduction) and D-fucose (approximately 40-fold reduction). The chain is L-arabinose-binding periplasmic protein (araF) from Escherichia coli (strain K12).